We begin with the raw amino-acid sequence, 479 residues long: Monodehydroascorbate reductase 1, peroxisomal (479 aa).

Residues methionine 1–arginine 3 lie on the Cytoplasmic side of the membrane. The chain crosses the membrane as a helical span at residues alanine 4–valine 24. FAD-binding positions include glycine 12–alanine 15, glutamate 41, arginine 48, lysine 53, and arginine 147–asparagine 148. Topologically, residues arginine 25–threonine 445 are peroxisomal. NAD(+) is bound by residues glycine 172–glutamate 178, arginine 202, and glycine 260. NADP(+) is bound by residues tyrosine 174–glutamate 178, arginine 202, and glycine 260. Aspartate 297 is an FAD binding site. An NAD(+)-binding site is contributed by glutamate 314 to histidine 315. Glutamate 314–histidine 315 is an NADP(+) binding site. Valine 316 serves as a coordination point for FAD. Residue arginine 320 coordinates L-ascorbate. An FAD-binding site is contributed by tyrosine 347. Tyrosine 347 contributes to the NAD(+) binding site. NADP(+) is bound at residue tyrosine 347. Arginine 349 is an L-ascorbate binding site. The helical transmembrane segment at cysteine 446–tryptophan 466 threads the bilayer. Residues tyrosine 467–phenylalanine 479 are Cytoplasmic-facing.

The protein belongs to the FAD-dependent oxidoreductase family. It depends on FAD as a cofactor.

Its subcellular location is the peroxisome membrane. It catalyses the reaction 2 monodehydro-L-ascorbate radical + NADH + H(+) = 2 L-ascorbate + NAD(+). In terms of biological role, catalyzes the conversion of monodehydroascorbate to ascorbate, oxidizing NADH in the process. Ascorbate is a major antioxidant against reactive oxygen species (ROS) and nitric oxide (NO). This is Monodehydroascorbate reductase 1, peroxisomal from Oryza sativa subsp. japonica (Rice).